A 473-amino-acid polypeptide reads, in one-letter code: tRNA-2-methylthio-N(6)-dimethylallyladenosine synthase (473 aa).

In terms of domain architecture, MTTase N-terminal spans 5–125; it reads RKLHIKSFGC…LPQLLAEAAR (121 aa). [4Fe-4S] cluster-binding residues include Cys14, Cys50, Cys88, Cys166, Cys170, and Cys173. One can recognise a Radical SAM core domain in the interval 152–384; the sequence is RARGISAFVT…QELIDSQQAA (233 aa). One can recognise a TRAM domain in the interval 387 to 449; sequence AAVIGTTVEV…RYSLIGELAA (63 aa). The interval 452–473 is disordered; it reads QHSGFATRSEDSPQSLPITTGA.

Belongs to the methylthiotransferase family. MiaB subfamily. In terms of assembly, monomer. [4Fe-4S] cluster serves as cofactor.

It localises to the cytoplasm. The catalysed reaction is N(6)-dimethylallyladenosine(37) in tRNA + (sulfur carrier)-SH + AH2 + 2 S-adenosyl-L-methionine = 2-methylsulfanyl-N(6)-dimethylallyladenosine(37) in tRNA + (sulfur carrier)-H + 5'-deoxyadenosine + L-methionine + A + S-adenosyl-L-homocysteine + 2 H(+). Catalyzes the methylthiolation of N6-(dimethylallyl)adenosine (i(6)A), leading to the formation of 2-methylthio-N6-(dimethylallyl)adenosine (ms(2)i(6)A) at position 37 in tRNAs that read codons beginning with uridine. In Rhodopseudomonas palustris (strain BisB18), this protein is tRNA-2-methylthio-N(6)-dimethylallyladenosine synthase.